The sequence spans 553 residues: Arginine--tRNA ligase (553 aa).

The 'HIGH' region motif lies at 132–140 (PTGDLHIGH).

The protein belongs to the class-I aminoacyl-tRNA synthetase family. In terms of assembly, monomer.

It localises to the cytoplasm. The catalysed reaction is tRNA(Arg) + L-arginine + ATP = L-arginyl-tRNA(Arg) + AMP + diphosphate. This chain is Arginine--tRNA ligase, found in Staphylococcus aureus (strain N315).